The sequence spans 792 residues: Phenylalanine--tRNA ligase beta subunit (792 aa).

The tRNA-binding domain maps to 39–150; the sequence is GDEITNVVTG…ENTPIGKDIK (112 aa). The 76-residue stretch at 404 to 479 folds into the B5 domain; the sequence is SEPNIVEVDY…RIYGYNKVPS (76 aa). Mg(2+)-binding residues include D457, D463, E466, and E467. The FDX-ACB domain occupies 699-792; the sequence is PKFPTVTRDI…LEHVLGAELR (94 aa).

The protein belongs to the phenylalanyl-tRNA synthetase beta subunit family. Type 1 subfamily. As to quaternary structure, tetramer of two alpha and two beta subunits. Mg(2+) is required as a cofactor.

It localises to the cytoplasm. The enzyme catalyses tRNA(Phe) + L-phenylalanine + ATP = L-phenylalanyl-tRNA(Phe) + AMP + diphosphate + H(+). The protein is Phenylalanine--tRNA ligase beta subunit of Clostridium acetobutylicum (strain ATCC 824 / DSM 792 / JCM 1419 / IAM 19013 / LMG 5710 / NBRC 13948 / NRRL B-527 / VKM B-1787 / 2291 / W).